Reading from the N-terminus, the 240-residue chain is Transposase for insertion sequence element IS3411 (240 aa).

Residues 125–240 (VAERPDQLWV…RASMVFTKRR (116 aa)) enclose the Integrase catalytic domain.

Involved in the transposition of the insertion sequence. This chain is Transposase for insertion sequence element IS3411, found in Escherichia coli.